Reading from the N-terminus, the 79-residue chain is RNA-binding protein KhpA (79 aa).

Residues 32 to 79 enclose the KH domain; it reads TVVIELRVDPAELGKVIGKQGRIARALRTILTAIGRKIGKRVVLEILE.

It belongs to the KhpA RNA-binding protein family.

The protein resides in the cytoplasm. Its function is as follows. A probable RNA-binding protein. This is RNA-binding protein KhpA from Aquifex aeolicus (strain VF5).